The sequence spans 145 residues: D-aminoacyl-tRNA deacylase (145 aa).

Residues 137 to 138 (GP) carry the Gly-cisPro motif, important for rejection of L-amino acids motif.

Belongs to the DTD family. Homodimer.

It is found in the cytoplasm. The enzyme catalyses glycyl-tRNA(Ala) + H2O = tRNA(Ala) + glycine + H(+). It catalyses the reaction a D-aminoacyl-tRNA + H2O = a tRNA + a D-alpha-amino acid + H(+). In terms of biological role, an aminoacyl-tRNA editing enzyme that deacylates mischarged D-aminoacyl-tRNAs. Also deacylates mischarged glycyl-tRNA(Ala), protecting cells against glycine mischarging by AlaRS. Acts via tRNA-based rather than protein-based catalysis; rejects L-amino acids rather than detecting D-amino acids in the active site. By recycling D-aminoacyl-tRNA to D-amino acids and free tRNA molecules, this enzyme counteracts the toxicity associated with the formation of D-aminoacyl-tRNA entities in vivo and helps enforce protein L-homochirality. The sequence is that of D-aminoacyl-tRNA deacylase from Stutzerimonas stutzeri (strain A1501) (Pseudomonas stutzeri).